Consider the following 67-residue polypeptide: ESSNKRENQKQIVDKHNALRRSVRPTARNMLQMEWNSNAAQNAKRFADRCTFAHSPPHLRTVGIFSC.

Residues 13–58 (VDKHNALRRSVRPTARNMLQMEWNSNAAQNAKRFADRCTFAHSPPH) form the SCP domain.

Belongs to the CRISP family. Post-translationally, contains 8 disulfide bonds. In terms of tissue distribution, expressed by the venom gland.

The protein localises to the secreted. In terms of biological role, blocks contraction of smooth muscle elicited by high potassium-induced depolarization, but does not block caffeine-stimulated contraction. May target voltage-gated calcium channels on smooth muscle. In Bungarus candidus (Malayan krait), this protein is Cysteine-rich venom protein bucarin.